The sequence spans 640 residues: EF-hand domain-containing protein 1 (640 aa).

The tract at residues 1–45 (MVSNPVHGLPFLPGTSFKDSTKTAFHRSQTLSYRNGYAIVRRPTV) is required for its localization in the mitotic spindle and interaction with alpha-tubulin. 3 DM10 domains span residues 93-198 (DKKV…ESQG), 239-359 (DKQV…KEKF), and 416-520 (DNKV…ESNA). The disordered stretch occupies residues 535–554 (VRKREAPAPEAESKQTEKDP). Over residues 538–554 (REAPAPEAESKQTEKDP) the composition is skewed to basic and acidic residues. An EF-hand domain is found at 574–609 (SCKDNIREAFQIYDKEASGYVDRDMFFKICESLNVP).

Microtubule inner protein component of sperm flagellar doublet microtubules. Interacts with the C-terminus of CACNA1E. Interacts with alpha-tubulin. In terms of tissue distribution, widely expressed. Not detected in lymphocytes.

Its subcellular location is the cytoplasm. The protein localises to the cytoskeleton. It is found in the cilium axoneme. It localises to the flagellum axoneme. The protein resides in the microtubule organizing center. Its subcellular location is the centrosome. The protein localises to the spindle. It is found in the spindle pole. Functionally, microtubule inner protein (MIP) part of the dynein-decorated doublet microtubules (DMTs) in cilia axoneme, which is required for motile cilia beating. Microtubule-associated protein which regulates cell division and neuronal migration during cortical development. Necessary for radial and tangential cell migration during brain development, possibly acting as a regulator of cell morphology and process formation during migration. May enhance calcium influx through CACNA1E and stimulate programmed cell death. The protein is EF-hand domain-containing protein 1 of Homo sapiens (Human).